A 315-amino-acid chain; its full sequence is Olfactory receptor 3A3 (315 aa).

Over 1–28 (MESEAGTNRTAVAEFMLLGLVQTEEMQS) the chain is Extracellular. A glycan (N-linked (GlcNAc...) asparagine) is linked at N8. Residues 29–52 (VIFVLLLFAYLVTTGGNLSILAAI) form a helical membrane-spanning segment. The Cytoplasmic portion of the chain corresponds to 53–60 (LVEPKLHT). Residues 61–82 (PMYFFLGNLSVLDVGCITVTVP) form a helical membrane-spanning segment. Residues 83 to 103 (AMLGRLLSHKSTISYDACLSQ) are Extracellular-facing. C100 and C192 are oxidised to a cystine. Residues 104-123 (LFFFHLLAGMDCFLLTAMAY) traverse the membrane as a helical segment. The Cytoplasmic portion of the chain corresponds to 124-143 (DRFLAICRPLTYSTHMNQRV). A helical membrane pass occupies residues 144–161 (QRMLVAVSWTCAFTNALT). The Extracellular portion of the chain corresponds to 162 to 199 (HTIALTTLNFCGPSVINHFYCDLPQLFQLSCSSTQLNE). The helical transmembrane segment at 200–222 (LLLFVAAAVMAVAPLVFISVSYA) threads the bilayer. At 223-239 (HVVAAVLQIHSAEGRKK) the chain is on the cytoplasmic side. Residues 240–262 (AFSTCGSHLTVVGIFYGTGVFSY) traverse the membrane as a helical segment. The Extracellular segment spans residues 263-275 (MRLGSVESSDKDK). The chain crosses the membrane as a helical span at residues 276 to 295 (GVGVFMTVINPMLNPLIYSL). At 296–315 (RNTDVQGALCQLLVVKRSLT) the chain is on the cytoplasmic side.

This sequence belongs to the G-protein coupled receptor 1 family.

The protein resides in the cell membrane. Functionally, odorant receptor. The chain is Olfactory receptor 3A3 (OR3A3) from Pan troglodytes (Chimpanzee).